We begin with the raw amino-acid sequence, 209 residues long: Putative tripartite motif-containing protein 61 (209 aa).

An RING-type zinc finger spans residues 16-57 (CPICLDYLKDPVTISCGHNFCLSCIIMSWKDLHDSFPCPFCH). The B box-type zinc finger occupies 92–133 (EEKHVCKKHNQVLTFFCQKDLELLCPRCSLSTDHQHHCVWPI). Zn(2+) contacts are provided by Cys-97, His-100, Cys-119, and His-125.

The sequence is that of Putative tripartite motif-containing protein 61 (TRIM61) from Homo sapiens (Human).